A 436-amino-acid chain; its full sequence is Ribosomal protein uS12 methylthiotransferase RimO (436 aa).

The MTTase N-terminal domain occupies 4–122 (KRIDIITLGC…LLQDLGKTYH (119 aa)). Residues C13, C51, C85, C146, C150, and C153 each contribute to the [4Fe-4S] cluster site. Positions 132–363 (TTPKHYAYLK…MDIQQGISAE (232 aa)) constitute a Radical SAM core domain. The region spanning 366–433 (AAKIGQQMKV…DFDLYAKILN (68 aa)) is the TRAM domain.

It belongs to the methylthiotransferase family. RimO subfamily. [4Fe-4S] cluster serves as cofactor.

The protein resides in the cytoplasm. It carries out the reaction L-aspartate(89)-[ribosomal protein uS12]-hydrogen + (sulfur carrier)-SH + AH2 + 2 S-adenosyl-L-methionine = 3-methylsulfanyl-L-aspartate(89)-[ribosomal protein uS12]-hydrogen + (sulfur carrier)-H + 5'-deoxyadenosine + L-methionine + A + S-adenosyl-L-homocysteine + 2 H(+). Functionally, catalyzes the methylthiolation of an aspartic acid residue of ribosomal protein uS12. The sequence is that of Ribosomal protein uS12 methylthiotransferase RimO from Bacteroides thetaiotaomicron (strain ATCC 29148 / DSM 2079 / JCM 5827 / CCUG 10774 / NCTC 10582 / VPI-5482 / E50).